Here is a 311-residue protein sequence, read N- to C-terminus: tRNA dimethylallyltransferase (311 aa).

Position 9-16 (9-16 (GPTAVGKT)) interacts with ATP. 11–16 (TAVGKT) is a substrate binding site. The interval 34–37 (DSMQ) is interaction with substrate tRNA.

The protein belongs to the IPP transferase family. In terms of assembly, monomer. It depends on Mg(2+) as a cofactor.

The catalysed reaction is adenosine(37) in tRNA + dimethylallyl diphosphate = N(6)-dimethylallyladenosine(37) in tRNA + diphosphate. Its function is as follows. Catalyzes the transfer of a dimethylallyl group onto the adenine at position 37 in tRNAs that read codons beginning with uridine, leading to the formation of N6-(dimethylallyl)adenosine (i(6)A). This Clostridium botulinum (strain Loch Maree / Type A3) protein is tRNA dimethylallyltransferase.